We begin with the raw amino-acid sequence, 513 residues long: Maturase K (513 aa).

Belongs to the intron maturase 2 family. MatK subfamily.

Its subcellular location is the plastid. The protein localises to the chloroplast. Functionally, usually encoded in the trnK tRNA gene intron. Probably assists in splicing its own and other chloroplast group II introns. This chain is Maturase K, found in Eleusine indica (Goosegrass).